The primary structure comprises 332 residues: DNA-directed RNA polymerase subunit alpha (332 aa).

The tract at residues 1–231 is alpha N-terminal domain (alpha-NTD); sequence MQTNLLKPKT…EQLAVFAQLD (231 aa). Residues 252–332 form an alpha C-terminal domain (alpha-CTD) region; it reads FDPILLRPVD…NWPPAGLEKR (81 aa).

Belongs to the RNA polymerase alpha chain family. In terms of assembly, homodimer. The RNAP catalytic core consists of 2 alpha, 1 beta, 1 beta' and 1 omega subunit. When a sigma factor is associated with the core the holoenzyme is formed, which can initiate transcription.

The catalysed reaction is RNA(n) + a ribonucleoside 5'-triphosphate = RNA(n+1) + diphosphate. In terms of biological role, DNA-dependent RNA polymerase catalyzes the transcription of DNA into RNA using the four ribonucleoside triphosphates as substrates. This is DNA-directed RNA polymerase subunit alpha from Delftia acidovorans (strain DSM 14801 / SPH-1).